The sequence spans 336 residues: Cinnamoyl-CoA reductase 2 (336 aa).

NADP(+) is bound by residues 21-27 (GAGGFIA), Arg46, Lys52, 72-73 (DL), 92-94 (TAS), Tyr165, Lys169, 192-195 (PVVV), and Ser207. Cys158 and Cys166 are disulfide-bonded. Lys169 functions as the Proton donor in the catalytic mechanism.

This sequence belongs to the NAD(P)-dependent epimerase/dehydratase family. Dihydroflavonol-4-reductase subfamily. Post-translationally, the formation of a reversible disulfide bond reduces activity by perturbing the positioning of nearby catalytic residues. Mainly expressed in roots and stems, especially at the second internode and, to a lower extent, in leaves and flowers. Localized in vascular elements, with weaker expression in the interfascicular (xylem fiber) region.

It localises to the cytoplasm. The catalysed reaction is (E)-coniferaldehyde + NADP(+) + CoA = (E)-feruloyl-CoA + NADPH + H(+). The enzyme catalyses (E)-4-coumaraldehyde + NADP(+) + CoA = (E)-4-coumaroyl-CoA + NADPH + H(+). It carries out the reaction (E)-sinapaldehyde + NADP(+) + CoA = (E)-sinapoyl-CoA + NADPH + H(+). It catalyses the reaction (E)-cinnamaldehyde + NADP(+) + CoA = (E)-cinnamoyl-CoA + NADPH + H(+). The catalysed reaction is (E)-caffeyl aldehyde + NADP(+) + CoA = (E)-caffeoyl-CoA + NADPH + H(+). It functions in the pathway aromatic compound metabolism; phenylpropanoid biosynthesis. Functionally, involved in the latter stages of lignin biosynthesis. Catalyzes one of the last steps of monolignol biosynthesis, the conversion of cinnamoyl-CoAs into their corresponding cinnamaldehydes. Mediates the conversion of caffeoyl-CoA and coumaroyl-CoA to caffaldehyde and coumaraldehyde, respectively. Also active, with a lower efficiency, toward feruloyl-CoA and sinapoyl-CoA. Involved in the production of floral volatile phenylpropanoids in flowers of fragrant cultivars from cinnamic acid, a common precursor with the anthocyanin biosynthesis pathway involved in flower pigmentation. The protein is Cinnamoyl-CoA reductase 2 of Medicago truncatula (Barrel medic).